Consider the following 80-residue polypeptide: Small ribosomal subunit protein bS18 (80 aa).

It belongs to the bacterial ribosomal protein bS18 family. In terms of assembly, part of the 30S ribosomal subunit. Forms a tight heterodimer with protein bS6.

In terms of biological role, binds as a heterodimer with protein bS6 to the central domain of the 16S rRNA, where it helps stabilize the platform of the 30S subunit. This Clostridium botulinum (strain 657 / Type Ba4) protein is Small ribosomal subunit protein bS18.